Here is a 262-residue protein sequence, read N- to C-terminus: Phosphonates import ATP-binding protein PhnC (262 aa).

One can recognise an ABC transporter domain in the interval Ile-5 to Asn-253. Gly-37–Ser-44 is a binding site for ATP.

It belongs to the ABC transporter superfamily. Phosphonates importer (TC 3.A.1.9.1) family. The complex is composed of two ATP-binding proteins (PhnC), two transmembrane proteins (PhnE) and a solute-binding protein (PhnD).

It localises to the cell inner membrane. It catalyses the reaction phosphonate(out) + ATP + H2O = phosphonate(in) + ADP + phosphate + H(+). In terms of biological role, part of the ABC transporter complex PhnCDE involved in phosphonates import. Responsible for energy coupling to the transport system. This Escherichia coli O6:H1 (strain CFT073 / ATCC 700928 / UPEC) protein is Phosphonates import ATP-binding protein PhnC.